The following is a 414-amino-acid chain: uncharacterized protein (414 aa).

It belongs to the glycosyltransferase 28 family.

This is an uncharacterized protein from Mycobacterium tuberculosis (strain CDC 1551 / Oshkosh).